The following is a 448-amino-acid chain: MNVYELNMDGLVGQTHHYAGLSSGNIASTNNALSISNPQAAARQGLEKMRQLYNMGLKQGLLPPHQRPNLNLLYQLGFKGTPSEQINKAYKTAPELLSACYSASSMWTANAATVSASVDTEDNKVHFTAANLISNLHRHQEADFSKKLLEFIFSNSDYFNHHPLLPKSMGTSDEGAANHNRLCQSHAHSGINLFVYGKKVLGNHQFEQSPIKYPARQTKEASEAIARNHLLNPERVIFACQNPLAIDQGVFHNDVISVANEHVFLVHEEAFYNQAYVLDQLREKADFPLVIIQISKEQISVSEAVDTYLFNSQLITLPDQKNMILIAPAECQANLKVKTCIDGLVADPQNPINSVYYLDLKQSMRNGGGPACLRLRVPLNDYELKAMHQGILIDNDLLDILDKWVLKYYRTELKIPDLADPQLLYECLDALDELTQILKLGSIYPFQS.

Substrate-binding positions include 19-28, asparagine 110, and 137-138; these read AGLSSGNIAS and HR. Glutamate 174 is an active-site residue. Arginine 216 provides a ligand contact to substrate. Histidine 252 is an active-site residue. Residues aspartate 254 and asparagine 366 each coordinate substrate. The active-site Nucleophile is the cysteine 372.

Belongs to the succinylarginine dihydrolase family. In terms of assembly, homodimer.

It carries out the reaction N(2)-succinyl-L-arginine + 2 H2O + 2 H(+) = N(2)-succinyl-L-ornithine + 2 NH4(+) + CO2. The protein operates within amino-acid degradation; L-arginine degradation via AST pathway; L-glutamate and succinate from L-arginine: step 2/5. In terms of biological role, catalyzes the hydrolysis of N(2)-succinylarginine into N(2)-succinylornithine, ammonia and CO(2). The polypeptide is N-succinylarginine dihydrolase (Legionella pneumophila (strain Corby)).